The chain runs to 138 residues: Thyrotropin subunit beta (138 aa).

Residues 1 to 20 (MTAIYLMSMLFGLACGQAMS) form the signal peptide. Cystine bridges form between cysteine 22–cysteine 72, cysteine 36–cysteine 87, cysteine 39–cysteine 125, cysteine 47–cysteine 103, cysteine 51–cysteine 105, and cysteine 108–cysteine 115. The N-linked (GlcNAc...) asparagine glycan is linked to asparagine 43. Residues 133–138 (VVGFSI) constitute a propeptide that is removed on maturation.

The protein belongs to the glycoprotein hormones subunit beta family. Heterodimer of a common alpha chain and a unique beta chain which confers biological specificity to thyrotropin, lutropin, follitropin and gonadotropin.

The protein localises to the secreted. Its function is as follows. Indispensable for the control of thyroid structure and metabolism. The protein is Thyrotropin subunit beta (TSHB) of Canis lupus familiaris (Dog).